A 205-amino-acid chain; its full sequence is Methylthioribulose-1-phosphate dehydratase (205 aa).

Histidine 96 and histidine 98 together coordinate Zn(2+).

This sequence belongs to the aldolase class II family. MtnB subfamily. Requires Zn(2+) as cofactor.

The enzyme catalyses 5-(methylsulfanyl)-D-ribulose 1-phosphate = 5-methylsulfanyl-2,3-dioxopentyl phosphate + H2O. The protein operates within amino-acid biosynthesis; L-methionine biosynthesis via salvage pathway; L-methionine from S-methyl-5-thio-alpha-D-ribose 1-phosphate: step 2/6. Its function is as follows. Catalyzes the dehydration of methylthioribulose-1-phosphate (MTRu-1-P) into 2,3-diketo-5-methylthiopentyl-1-phosphate (DK-MTP-1-P). In Pseudomonas paraeruginosa (strain DSM 24068 / PA7) (Pseudomonas aeruginosa (strain PA7)), this protein is Methylthioribulose-1-phosphate dehydratase.